Here is a 105-residue protein sequence, read N- to C-terminus: UPF0145 protein lpl0253 (105 aa).

It belongs to the UPF0145 family.

This is UPF0145 protein lpl0253 from Legionella pneumophila (strain Lens).